The chain runs to 278 residues: Indole-3-glycerol phosphate synthase (278 aa).

The protein belongs to the TrpC family.

It carries out the reaction 1-(2-carboxyphenylamino)-1-deoxy-D-ribulose 5-phosphate + H(+) = (1S,2R)-1-C-(indol-3-yl)glycerol 3-phosphate + CO2 + H2O. Its pathway is amino-acid biosynthesis; L-tryptophan biosynthesis; L-tryptophan from chorismate: step 4/5. The polypeptide is Indole-3-glycerol phosphate synthase (Pseudomonas aeruginosa (strain UCBPP-PA14)).